We begin with the raw amino-acid sequence, 239 residues long: Small ribosomal subunit protein uS3 (239 aa).

The 69-residue stretch at 39–107 (VREFLRKKLA…ATSINIEEIR (69 aa)) folds into the KH type-2 domain. A disordered region spans residues 215–239 (TSNTNELSDEKRNRRKPRNANRRKE). Positions 227–239 (NRRKPRNANRRKE) are enriched in basic residues.

The protein belongs to the universal ribosomal protein uS3 family. Part of the 30S ribosomal subunit. Forms a tight complex with proteins S10 and S14.

Functionally, binds the lower part of the 30S subunit head. Binds mRNA in the 70S ribosome, positioning it for translation. This is Small ribosomal subunit protein uS3 from Dichelobacter nodosus (strain VCS1703A).